Reading from the N-terminus, the 256-residue chain is MPLHKYPVWLWKRLQLREGICSRLPGHYLRSLEEERTPTPVHYRPHGAKFKINPKNGQRERVEDVPIPIYFPPESQRGLWGGEGWILGQIYANNDKLSKRLKKVWKPQLFEREFYSEILDKKFTVTVTMRTLDLIDEAYGLDFYILKTPKEDLCSKFGMDLKRGMLLRLARQDPQLHPEDPERRAAIYDKYKEFAIPEEEAEWVGLTLEEAIEKQRLLEEKDPVPLFKIYVAELIQQLQQQALSEPAVVQKRASGQ.

A mitochondrion-targeting transit peptide spans 1–55 (MPLHKYPVWLWKRLQLREGICSRLPGHYLRSLEEERTPTPVHYRPHGAKFKINPK).

The protein belongs to the bacterial ribosomal protein bL28 family. In terms of assembly, component of the mitochondrial large ribosomal subunit (mt-LSU). Mature mammalian 55S mitochondrial ribosomes consist of a small (28S) and a large (39S) subunit. The 28S small subunit contains a 12S ribosomal RNA (12S mt-rRNA) and 30 different proteins. The 39S large subunit contains a 16S rRNA (16S mt-rRNA), a copy of mitochondrial valine transfer RNA (mt-tRNA(Val)), which plays an integral structural role, and 52 different proteins. Interacts with OXA1L. In terms of tissue distribution, found in a variety of normal tissues including spleen, testes, thymus, liver, kidney, brain, adrenal, lung and retinal tissue.

It localises to the mitochondrion. The sequence is that of Large ribosomal subunit protein bL28m (MRPL28) from Homo sapiens (Human).